The chain runs to 144 residues: Mediator of RNA polymerase II transcription subunit 21 (144 aa).

This sequence belongs to the Mediator complex subunit 21 family. Interacts with PPARG. Component of the Mediator complex, which is composed of MED1, MED4, MED6, MED7, MED8, MED9, MED10, MED11, MED12, MED13, MED13L, MED14, MED15, MED16, MED17, MED18, MED19, MED20, MED21, MED22, MED23, MED24, MED25, MED26, MED27, MED29, MED30, MED31, CCNC, CDK8 and CDC2L6/CDK11. The MED12, MED13, CCNC and CDK8 subunits form a distinct module termed the CDK8 module. Mediator containing the CDK8 module is less active than Mediator lacking this module in supporting transcriptional activation. Individual preparations of the Mediator complex lacking one or more distinct subunits have been variously termed ARC, CRSP, DRIP, PC2, SMCC and TRAP. Interacts with THRA in a ligand-dependent fashion.

It localises to the nucleus. In terms of biological role, component of the Mediator complex, a coactivator involved in the regulated transcription of nearly all RNA polymerase II-dependent genes. Mediator functions as a bridge to convey information from gene-specific regulatory proteins to the basal RNA polymerase II transcription machinery. Mediator is recruited to promoters by direct interactions with regulatory proteins and serves as a scaffold for the assembly of a functional preinitiation complex with RNA polymerase II and the general transcription factors. This chain is Mediator of RNA polymerase II transcription subunit 21 (MED21), found in Homo sapiens (Human).